The chain runs to 623 residues: Aspartate--tRNA(Asp/Asn) ligase (623 aa).

Glu175 contacts L-aspartate. The interval Gln199 to Lys202 is aspartate. 2 residues coordinate L-aspartate: Arg221 and His455. Residue Arg221–Glu223 participates in ATP binding. An ATP-binding site is contributed by Glu517. An L-aspartate-binding site is contributed by Arg524. Gly569–Arg572 serves as a coordination point for ATP.

Belongs to the class-II aminoacyl-tRNA synthetase family. Type 1 subfamily. In terms of assembly, homodimer.

It is found in the cytoplasm. The catalysed reaction is tRNA(Asx) + L-aspartate + ATP = L-aspartyl-tRNA(Asx) + AMP + diphosphate. Functionally, aspartyl-tRNA synthetase with relaxed tRNA specificity since it is able to aspartylate not only its cognate tRNA(Asp) but also tRNA(Asn). Reaction proceeds in two steps: L-aspartate is first activated by ATP to form Asp-AMP and then transferred to the acceptor end of tRNA(Asp/Asn). The chain is Aspartate--tRNA(Asp/Asn) ligase from Methylocella silvestris (strain DSM 15510 / CIP 108128 / LMG 27833 / NCIMB 13906 / BL2).